A 509-amino-acid chain; its full sequence is Cytochrome P450 monooxygenase fumoA (509 aa).

A helical transmembrane segment spans residues 5–27 (LANLNFPYLILSACLSAILLSRF). N317, N369, and N378 each carry an N-linked (GlcNAc...) asparagine glycan. Residue C456 coordinates heme. A glycan (N-linked (GlcNAc...) asparagine) is linked at N464.

The protein belongs to the cytochrome P450 family. Requires heme as cofactor.

The protein resides in the membrane. It participates in secondary metabolite biosynthesis. Cytochrome P450 monooxygenase; part of the gene cluster that mediates the biosynthesis of fumosorinone, a 2-pyridone alkaloid that acts as an inhibitor of protein tyrosine phosphatase 1B which is implicated asa negative regulator of insulin receptor signaling and a potential drug target for the treatment of type II diabetes and other associated metabolic syndromes. The polyketide-amino acid backbone of fumosorinone is first assembled by the PKS-NRPS hybrid fumoS. The PKS modules condense one acetyl-CoA starter unit with 7 malonyl-CoA units, programmed C-methylations occurring after the first 3 and the sixth extensions, and cycles of full reduction occurring after the first 2 extensions. Because fumoS lacks a designated enoyl reductase (ER) domain, the required activity is provided the enoyl reductase fumoC. Upon formation of the polyketide backbone on the thiotemplate, the polyketide is transferred to the NRPS module and linked to tyrosine to produce the acyltetramic acid intermediate called prefumosorinone A. The cytochrome P450 monooxygenase fumoA then probably catalyzes an unprecedented oxidative ring expansion of prefumosorinone A to form prefumosorinone B which contains the 2-pyridone core of fumosorinone. The cytochrome P450 monooxygenase fumoB might hydroxylate the nitrogen of prefumosorinone B, but not the acyltetramic acid prefumosorinone A, to form fumosorinone. In Cordyceps fumosorosea (strain ARSEF 2679) (Isaria fumosorosea), this protein is Cytochrome P450 monooxygenase fumoA.